We begin with the raw amino-acid sequence, 429 residues long: Oxysterol-binding protein-like protein OBPalpha (429 aa).

It belongs to the OSBP family.

This chain is Oxysterol-binding protein-like protein OBPalpha (OBPALPHA), found in Candida albicans (strain SC5314 / ATCC MYA-2876) (Yeast).